A 144-amino-acid chain; its full sequence is Large ribosomal subunit protein uL15 (144 aa).

The tract at residues 1 to 51 (MRLNTLSPAEGAKHSAKRLGRGIGSGLGKTGGRGHKGQKSRTGGKVRRGFE) is disordered. The span at 21-31 (RGIGSGLGKTG) shows a compositional bias: gly residues. Over residues 32–47 (GRGHKGQKSRTGGKVR) the composition is skewed to basic residues.

The protein belongs to the universal ribosomal protein uL15 family. As to quaternary structure, part of the 50S ribosomal subunit.

Functionally, binds to the 23S rRNA. The polypeptide is Large ribosomal subunit protein uL15 (Actinobacillus succinogenes (strain ATCC 55618 / DSM 22257 / CCUG 43843 / 130Z)).